The primary structure comprises 119 residues: Large ribosomal subunit protein bL12 (119 aa).

The protein belongs to the bacterial ribosomal protein bL12 family. Homodimer. Part of the ribosomal stalk of the 50S ribosomal subunit. Forms a multimeric L10(L12)X complex, where L10 forms an elongated spine to which 2 to 4 L12 dimers bind in a sequential fashion. Binds GTP-bound translation factors.

Functionally, forms part of the ribosomal stalk which helps the ribosome interact with GTP-bound translation factors. Is thus essential for accurate translation. In Colwellia psychrerythraea (strain 34H / ATCC BAA-681) (Vibrio psychroerythus), this protein is Large ribosomal subunit protein bL12.